A 179-amino-acid polypeptide reads, in one-letter code: Crossover junction endodeoxyribonuclease RuvC (179 aa).

Active-site residues include D7, E67, and D140. Mg(2+) is bound by residues D7, E67, and D140.

This sequence belongs to the RuvC family. Homodimer which binds Holliday junction (HJ) DNA. The HJ becomes 2-fold symmetrical on binding to RuvC with unstacked arms; it has a different conformation from HJ DNA in complex with RuvA. In the full resolvosome a probable DNA-RuvA(4)-RuvB(12)-RuvC(2) complex forms which resolves the HJ. The cofactor is Mg(2+).

The protein resides in the cytoplasm. The catalysed reaction is Endonucleolytic cleavage at a junction such as a reciprocal single-stranded crossover between two homologous DNA duplexes (Holliday junction).. The RuvA-RuvB-RuvC complex processes Holliday junction (HJ) DNA during genetic recombination and DNA repair. Endonuclease that resolves HJ intermediates. Cleaves cruciform DNA by making single-stranded nicks across the HJ at symmetrical positions within the homologous arms, yielding a 5'-phosphate and a 3'-hydroxyl group; requires a central core of homology in the junction. The consensus cleavage sequence is 5'-(A/T)TT(C/G)-3'. Cleavage occurs on the 3'-side of the TT dinucleotide at the point of strand exchange. HJ branch migration catalyzed by RuvA-RuvB allows RuvC to scan DNA until it finds its consensus sequence, where it cleaves and resolves the cruciform DNA. The protein is Crossover junction endodeoxyribonuclease RuvC of Salinibacter ruber (strain DSM 13855 / M31).